The primary structure comprises 970 residues: MASTKAPGPGEKHHSIDAQLRQLVPGKVSEDDKLIEYDALLVDRFLNILQDLHGPSLREFVQECYEVSADYEGKGDTTKLGELGAKLTGLAPADAILVASSILHMLNLANLAEEVQIAHRRRNSKLKKGGFADEGSATTESDIEETLKRLVSEVGKSPEEVFEALKNQTVDLVFTAHPTQSARRSLLQKNARIRNCLTQLNAKDITDDDKQELDEALQREIQAAFRTDEIRRAQPTPQAEMRYGMSYIHETVWKGVPKFLRRVDTALKNIGINERLPYNVSLIRFSSWMGGDRDGNPRVTPEVTRDVCLLARMMAANLYIDQIEELMFELSMWRCNDELRVRAEELHSSSGSKVTKYYIEFWKQIPPNEPYRVILGHVRDKLYNTRERARHLLASGVSEISAESSFTSIEEFLEPLELCYKSLCDCGDKAIADGSLLDLLRQVFTFGLSLVKLDIRQESERHTDVIDAITTHLGIGSYREWPEDKRQEWLLSELRGKRPLLPPDLPQTDEIADVIGAFHVLAELPPDSFGPYIISMATAPSDVLAVELLQRECGVRQPLPVVPLFERLADLQSAPASVERLFSVDWYMDRIKGKQQVMVGYSDSGKDAGRLSAAWQLYRAQEEMAQVAKRYGVKLTLFHGRGGTVGRGGGPTHLAILSQPPDTINGSIRVTVQGEVIEFCFGEEHLCFQTLQRFTAATLEHGMHPPVSPKPEWRKLMDEMAVVATEEYRSVVVKEARFVEYFRSATPETEYGRMNIGSRPAKRRPGGGITTLRAIPWIFSWTQTRFHLPVWLGVGAAFKFAIDKDVRNFQVLKEMYNEWPFFRVTLDLLEMVFAKGDPGIAGLYDELLVAEELKPFGKQLRDKYVETQQLLLQIAGHKDILEGDPFLKQGLVLRNPYITTLNVFQAYTLKRIRDPNFKVTPQPPLSKEFADENKPAGLVKLNPASEYPPGLEDTLILTMKGIAAGMQNTG.

S15 carries the phosphoserine modification. Residues H177, K606, and R647 contribute to the active site.

Belongs to the PEPCase type 1 family. In terms of assembly, homotetramer. Mg(2+) serves as cofactor.

The protein resides in the cytoplasm. It catalyses the reaction oxaloacetate + phosphate = phosphoenolpyruvate + hydrogencarbonate. It participates in photosynthesis; C4 acid pathway. Its activity is regulated as follows. By light-reversible phosphorylation. In terms of biological role, through the carboxylation of phosphoenolpyruvate (PEP) it forms oxaloacetate, a four-carbon dicarboxylic acid source for the tricarboxylic acid cycle. This chain is Phosphoenolpyruvate carboxylase 1 (PEP1), found in Zea mays (Maize).